A 109-amino-acid polypeptide reads, in one-letter code: Hainantoxin-XVIII-7 (109 aa).

A signal peptide spans 1 to 18 (MKLSIIIIATSLVIAVVA). The propeptide occupies 19-46 (FPSKDSKAIENDKTEQRMEIVVQETARA). Cystine bridges form between C47–C62, C55–C68, C59–C108, and C61–C81.

This sequence belongs to the neurotoxin 25 family. F7 subfamily. As to expression, expressed by the venom gland.

It localises to the secreted. Functionally, putative ion channel inhibitor. The sequence is that of Hainantoxin-XVIII-7 from Cyriopagopus hainanus (Chinese bird spider).